Consider the following 261-residue polypeptide: Zinc finger protein 664 (261 aa).

9 C2H2-type zinc fingers span residues 3–25, 31–53, 59–81, 87–109, 115–137, 143–165, 171–193, 199–221, and 227–249; these read YKCP…QKIH, HKCD…WRDH, YKCD…KKIH, YKCY…MRVH, YVCS…QRVH, FKCE…QRVH, YKCY…QRVH, YRCC…QRVH, and FKCD…QRVH. Lys-257 participates in a covalent cross-link: Glycyl lysine isopeptide (Lys-Gly) (interchain with G-Cter in SUMO2).

It belongs to the krueppel C2H2-type zinc-finger protein family.

It is found in the nucleus. May be involved in transcriptional regulation. The polypeptide is Zinc finger protein 664 (Znf664) (Mus musculus (Mouse)).